A 92-amino-acid polypeptide reads, in one-letter code: Small ribosomal subunit protein uS19c (92 aa).

This sequence belongs to the universal ribosomal protein uS19 family.

The protein localises to the plastid. Its subcellular location is the chloroplast. Functionally, protein S19 forms a complex with S13 that binds strongly to the 16S ribosomal RNA. The polypeptide is Small ribosomal subunit protein uS19c (Gossypium barbadense (Sea Island cotton)).